The chain runs to 120 residues: Large ribosomal subunit protein bL20 (120 aa).

The protein belongs to the bacterial ribosomal protein bL20 family.

Its function is as follows. Binds directly to 23S ribosomal RNA and is necessary for the in vitro assembly process of the 50S ribosomal subunit. It is not involved in the protein synthesizing functions of that subunit. This chain is Large ribosomal subunit protein bL20, found in Chlamydia abortus (strain DSM 27085 / S26/3) (Chlamydophila abortus).